Consider the following 338-residue polypeptide: 3 beta-hydroxysteroid dehydrogenase type 7 (338 aa).

The active-site Proton acceptor is the tyrosine 159. Lysine 163 is a binding site for NAD(+). 2 helical membrane-spanning segments follow: residues 258 to 278 and 280 to 300; these read LLPY…QWLL and PLVL…NTTF.

It belongs to the 3-beta-HSD family. High levels in liver and lung, moderate levels in spleen, brain, heart, kidney, jejunum and testis. Up-regulated in 3Y1 cells upon growth arrest.

The protein localises to the endoplasmic reticulum membrane. The catalysed reaction is 7alpha-hydroxycholesterol + NAD(+) = 7alpha-hydroxycholest-4-en-3-one + NADH + H(+). The enzyme catalyses 7alpha,25-dihydroxycholesterol + NAD(+) = 7alpha,25-dihydroxy-4-cholesten-3-one + NADH + H(+). It carries out the reaction (25R)-cholest-5-en-3beta,7alpha,26-triol + NAD(+) = (25R)-7alpha,26-dihydroxycholest-4-en-3-one + NADH + H(+). It catalyses the reaction (24S)-7alpha-dihydroxycholesterol + NAD(+) = (24S)-7alpha,24-dihydroxycholest-4-en-3-one + NADH + H(+). It functions in the pathway lipid metabolism; steroid biosynthesis. Its function is as follows. The 3-beta-HSD enzymatic system plays a crucial role in the biosynthesis of all classes of hormonal steroids. HSD VII is active against four 7-alpha-hydroxylated sterols. Does not metabolize several different C(19/21) steroids as substrates. Involved in bile acid synthesis. Plays a key role in cell positioning and movement in lymphoid tissues by mediating degradation of 7-alpha,25-dihydroxycholesterol (7-alpha,25-OHC): 7-alpha,25-OHC acts as a ligand for the G protein-coupled receptor GPR183/EBI2, a chemotactic receptor for a number of lymphoid cells. This is 3 beta-hydroxysteroid dehydrogenase type 7 from Rattus norvegicus (Rat).